Here is a 76-residue protein sequence, read N- to C-terminus: MKLTCVLIIAVLFLTACQLTTGETYSRGEQKDHALRSTDKNSKLTRQCTPVGGYCFDHHHCCSNHCIKSIGRCVAH.

Residues 1–22 (MKLTCVLIIAVLFLTACQLTTG) form the signal peptide. Positions 23 to 46 (ETYSRGEQKDHALRSTDKNSKLTR) are excised as a propeptide. Glutamine 47 is modified (pyrrolidone carboxylic acid). 3 disulfide bridges follow: cysteine 48–cysteine 62, cysteine 55–cysteine 66, and cysteine 61–cysteine 73.

The protein belongs to the conotoxin O1 superfamily. Expressed by the venom duct.

The protein localises to the secreted. The protein is Conotoxin ArMKLT2-032 of Conus arenatus (Sand-dusted cone).